The following is a 209-amino-acid chain: Large ribosomal subunit protein uL3 (209 aa).

This sequence belongs to the universal ribosomal protein uL3 family. As to quaternary structure, part of the 50S ribosomal subunit. Forms a cluster with proteins L14 and L19.

One of the primary rRNA binding proteins, it binds directly near the 3'-end of the 23S rRNA, where it nucleates assembly of the 50S subunit. This Clostridium botulinum (strain Okra / Type B1) protein is Large ribosomal subunit protein uL3.